The primary structure comprises 402 residues: Sulfate adenylyltransferase (402 aa).

It belongs to the sulfate adenylyltransferase family.

The catalysed reaction is sulfate + ATP + H(+) = adenosine 5'-phosphosulfate + diphosphate. It functions in the pathway sulfur metabolism; hydrogen sulfide biosynthesis; sulfite from sulfate: step 1/3. The protein is Sulfate adenylyltransferase of Ruthia magnifica subsp. Calyptogena magnifica.